We begin with the raw amino-acid sequence, 365 residues long: Chorismate synthase (365 aa).

The span at 41 to 51 (IQKELDRRRPG) shows a compositional bias: basic and acidic residues. Residues 41-62 (IQKELDRRRPGQSEVSTPRSEA) are disordered. An NADP(+)-binding site is contributed by arginine 48. FMN-binding positions include 125 to 127 (RSS), glycine 285, 300 to 304 (KPTPS), and arginine 327.

The protein belongs to the chorismate synthase family. FMNH2 is required as a cofactor.

It carries out the reaction 5-O-(1-carboxyvinyl)-3-phosphoshikimate = chorismate + phosphate. Its pathway is metabolic intermediate biosynthesis; chorismate biosynthesis; chorismate from D-erythrose 4-phosphate and phosphoenolpyruvate: step 7/7. Catalyzes the anti-1,4-elimination of the C-3 phosphate and the C-6 proR hydrogen from 5-enolpyruvylshikimate-3-phosphate (EPSP) to yield chorismate, which is the branch point compound that serves as the starting substrate for the three terminal pathways of aromatic amino acid biosynthesis. This reaction introduces a second double bond into the aromatic ring system. This is Chorismate synthase from Methanosarcina mazei (strain ATCC BAA-159 / DSM 3647 / Goe1 / Go1 / JCM 11833 / OCM 88) (Methanosarcina frisia).